Reading from the N-terminus, the 186-residue chain is Ribosome-recycling factor (186 aa).

The protein belongs to the RRF family.

It is found in the cytoplasm. Its function is as follows. Responsible for the release of ribosomes from messenger RNA at the termination of protein biosynthesis. May increase the efficiency of translation by recycling ribosomes from one round of translation to another. In Rickettsia typhi (strain ATCC VR-144 / Wilmington), this protein is Ribosome-recycling factor.